Reading from the N-terminus, the 747-residue chain is Flowering time control protein FCA (747 aa).

The tract at residues 80-101 (YSVRPTTPPVQQPLSGQKRGYP) is disordered. RRM domains follow at residues 120–201 (VKLF…YADG) and 211–291 (FKLF…FAEP). Positions 291–301 (PKRPKPGESRE) are enriched in basic and acidic residues. Residues 291-503 (PKRPKPGESR…QQPLQKMQHP (213 aa)) form a disordered region. Polar residues-rich tracts occupy residues 320–353 (RPTS…SNTG) and 395–406 (SSSATLQQQNRA). Over residues 448 to 460 (SSQLPTSQLPPQQ) the composition is skewed to low complexity. A compositionally biased stretch (polar residues) spans 461 to 498 (NISRATAPQTPLNINLRPTTVSSATVQFPPRSQQQPLQ). Residues 591–624 (GSVKCTWTEHTSPDGFKYYYNGLTGESKWEKPEE) enclose the WW domain. Residues 630-641 (REQQKQQQHQEK) show a composition bias toward basic and acidic residues. Disordered regions lie at residues 630–707 (REQQ…SGIG) and 722–747 (AASM…KNKA). Low complexity predominate over residues 642–673 (PTIQQSQTQLQPLQQQPQQVQQQYQGQQLQQP). 2 stretches are compositionally biased toward polar residues: residues 674 to 707 (FYSS…SGIG) and 726 to 739 (NDIS…QSPQ).

In terms of assembly, interacts (via C-terminus) with SWI3B and (via WW domain) with FY (via PPLPP motifs). Constitutively expressed, but the negative feedback maintains the active isoform a low level throughout much of the plant, except in meristematic cells at a specific time in development.

It localises to the nucleus. Functionally, plays a major role in the promotion of the transition of the vegetative meristem to reproductive development. Plays a role in the regulation of flowering time in the autonomous flowering pathway by decreasing FLOWERING LOCUS C mRNA levels. Required for RNA-mediated chromatin silencing of a range of loci in the genome. Cotranscriptionally recognizes aberrant RNA and marks it for silencing. Controls alternative cleavage and polyadenylation on pre-mRNAs and antisense RNAs. Acts redundantly with FPA to prevent the expression of distally polyadenylated antisense RNAs at the FLC locus. This Arabidopsis thaliana (Mouse-ear cress) protein is Flowering time control protein FCA (FCA).